We begin with the raw amino-acid sequence, 243 residues long: MEFIVIIPARFFSKRFPKKPLININGKPMIIHTIENAKKSGASRVIVVTDNNEIYSLVNKNGIEVLLTKKEYNSGTERLIEAIEKFKIKDNQIIVNLQVDEPFLNSDNIFNVAKKLKEKNLIVSTLAIPILNKKEIFDKNIVKVVIDINGYALYFSRSVIPWCENYNSYYIKNNFLKHVGIYAYYAKFVRLYSNYNSSKLEKMENLEQLRILWYGKRIYVSVENIKNCFSINTPSDMLNIKSF.

It belongs to the KdsB family.

It is found in the cytoplasm. The catalysed reaction is 3-deoxy-alpha-D-manno-oct-2-ulosonate + CTP = CMP-3-deoxy-beta-D-manno-octulosonate + diphosphate. It functions in the pathway nucleotide-sugar biosynthesis; CMP-3-deoxy-D-manno-octulosonate biosynthesis; CMP-3-deoxy-D-manno-octulosonate from 3-deoxy-D-manno-octulosonate and CTP: step 1/1. In terms of biological role, activates KDO (a required 8-carbon sugar) for incorporation into bacterial lipopolysaccharide in Gram-negative bacteria. In Wigglesworthia glossinidia brevipalpis, this protein is 3-deoxy-manno-octulosonate cytidylyltransferase.